A 332-amino-acid polypeptide reads, in one-letter code: Mitochondrial glycine transporter (332 aa).

Solcar repeat units follow at residues 11 to 94 (SSSY…LRQN), 121 to 205 (LSNL…LKKR), and 235 to 319 (TSAS…LIRR). The next 6 helical transmembrane spans lie at 17-42 (FGAG…TRVQ), 69-95 (GTVP…RQNV), 127-152 (LTTG…VRYE), 180-203 (GFGA…EELK), 239-265 (INFG…KTRI), and 294-312 (GLGL…AWTI).

This sequence belongs to the mitochondrial carrier (TC 2.A.29) family. SLC25A38 subfamily.

It localises to the mitochondrion inner membrane. The catalysed reaction is glycine(in) = glycine(out). Mitochondrial glycine transporter that imports glycine into the mitochondrial matrix. Plays an important role in providing glycine for the first enzymatic step in heme biosynthesis, the condensation of glycine with succinyl-CoA to produce 5-aminolevulinate (ALA) in the mitochondrial matrix. This Botryotinia fuckeliana (strain B05.10) (Noble rot fungus) protein is Mitochondrial glycine transporter.